Here is a 379-residue protein sequence, read N- to C-terminus: Putative beta-glucosidase 6 (379 aa).

Positions 1 to 20 (MEKTFALITIFLAFAFSGKC) are cleaved as a signal peptide. A beta-D-glucoside is bound by residues Gln-43, His-141, and 186 to 187 (NE). The active-site Proton donor is Glu-187. Cysteines 206 and 213 form a disulfide. N-linked (GlcNAc...) asparagine glycosylation is present at Asn-217. Tyr-329 is a binding site for a beta-D-glucoside. Asn-362 carries N-linked (GlcNAc...) asparagine glycosylation.

This sequence belongs to the glycosyl hydrolase 1 family.

It catalyses the reaction Hydrolysis of terminal, non-reducing beta-D-glucosyl residues with release of beta-D-glucose.. This is Putative beta-glucosidase 6 from Arabidopsis thaliana (Mouse-ear cress).